We begin with the raw amino-acid sequence, 263 residues long: Undecaprenyl-diphosphatase 2 (263 aa).

Helical transmembrane passes span 15-37 (GLTEFLPVSSTGHMILTGHLLGF), 42-62 (AKVFEVVIQLGSILAVVVIFW), 83-103 (LHIIIGMIPAGVLGVLFHSAI), 106-126 (VLFGPGPVVISLVAGGILMIV), 142-162 (ITYKQAFTIGMFQCLALWPGF), 183-203 (AEYTFILAVPMMVAASGLDLI), 216-236 (LFATGFITAFVVAMLAIVSFL), and 242-262 (VKLTPFAYYRFILAAVFYFFI).

The protein belongs to the UppP family.

It localises to the cell membrane. It catalyses the reaction di-trans,octa-cis-undecaprenyl diphosphate + H2O = di-trans,octa-cis-undecaprenyl phosphate + phosphate + H(+). Functionally, catalyzes the dephosphorylation of undecaprenyl diphosphate (UPP). Confers resistance to bacitracin. This is Undecaprenyl-diphosphatase 2 from Bacillus cereus (strain ATCC 10987 / NRS 248).